The chain runs to 127 residues: Aspartate 1-decarboxylase (127 aa).

The active-site Schiff-base intermediate with substrate; via pyruvic acid is Ser-25. The residue at position 25 (Ser-25) is a Pyruvic acid (Ser). Thr-57 lines the substrate pocket. Tyr-58 acts as the Proton donor in catalysis. Gly-73–Ala-75 serves as a coordination point for substrate.

Belongs to the PanD family. Heterooctamer of four alpha and four beta subunits. The cofactor is pyruvate. Is synthesized initially as an inactive proenzyme, which is activated by self-cleavage at a specific serine bond to produce a beta-subunit with a hydroxyl group at its C-terminus and an alpha-subunit with a pyruvoyl group at its N-terminus.

The protein resides in the cytoplasm. It carries out the reaction L-aspartate + H(+) = beta-alanine + CO2. It functions in the pathway cofactor biosynthesis; (R)-pantothenate biosynthesis; beta-alanine from L-aspartate: step 1/1. In terms of biological role, catalyzes the pyruvoyl-dependent decarboxylation of aspartate to produce beta-alanine. The sequence is that of Aspartate 1-decarboxylase from Dechloromonas aromatica (strain RCB).